The chain runs to 311 residues: Acetyl-coenzyme A carboxylase carboxyl transferase subunit beta (311 aa).

Residues 32–299 form the CoA carboxyltransferase N-terminal domain; sequence LWVKCPVSEE…TSMPAALTPP (268 aa). The segment at 291–311 is disordered; sequence SMPAALTPPAPDHVVADGGSH.

This sequence belongs to the AccD/PCCB family. Acetyl-CoA carboxylase is a heterohexamer composed of biotin carboxyl carrier protein (AccB), biotin carboxylase (AccC) and two subunits each of ACCase subunit alpha (AccA) and ACCase subunit beta (AccD).

It localises to the cytoplasm. It catalyses the reaction N(6)-carboxybiotinyl-L-lysyl-[protein] + acetyl-CoA = N(6)-biotinyl-L-lysyl-[protein] + malonyl-CoA. Its pathway is lipid metabolism; malonyl-CoA biosynthesis; malonyl-CoA from acetyl-CoA: step 1/1. Component of the acetyl coenzyme A carboxylase (ACC) complex. Biotin carboxylase (BC) catalyzes the carboxylation of biotin on its carrier protein (BCCP) and then the CO(2) group is transferred by the transcarboxylase to acetyl-CoA to form malonyl-CoA. The sequence is that of Acetyl-coenzyme A carboxylase carboxyl transferase subunit beta from Maricaulis maris (strain MCS10) (Caulobacter maris).